Here is a 211-residue protein sequence, read N- to C-terminus: Putative F-box protein At1g52490 (211 aa).

One can recognise an F-box domain in the interval Glu12 to Val59.

This is Putative F-box protein At1g52490 from Arabidopsis thaliana (Mouse-ear cress).